Here is a 463-residue protein sequence, read N- to C-terminus: Nucleobindin-1 (463 aa).

The N-terminal stretch at 1–26 (MPPSGPQGTLLLLPLLLLLLLRAVLA) is a signal peptide. Residue Ser86 is modified to Phosphoserine. Thr148 is modified (phosphothreonine). Residues 150 to 218 (EARDLELLIQ…QQRRHREHPK (69 aa)) adopt a coiled-coil conformation. A DNA-binding region spans residues 172-218 (HHEEFKRYEMLKEHERRRYLESLGEEQRKEAERRLEEQQRRHREHPK). Positions 193–210 (SLGEEQRKEAERRLEEQQ) are enriched in basic and acidic residues. The interval 193–221 (SLGEEQRKEAERRLEEQQRRHREHPKVNV) is disordered. Residues 228 to 321 (LKEVWEELDG…VTLGEFLAST (94 aa)) are binds to GNAI2 and GNAI3. EF-hand domains lie at 240–275 (PNRF…ELEK) and 292–327 (ERLR…KEFG). Ca(2+) contacts are provided by Asp253, Asn255, Asp257, Glu264, Asp305, Asn307, Asp309, and Glu316. The GBA motif lies at 303-333 (NVDTNQDRLVTLGEFLASTQRKEFGDTGEGW). Residues 341-409 (AYTEEELRRF…KQQQQQQQQQ (69 aa)) are a coiled coil. A disordered region spans residues 368 to 463 (LSQETEALGR…LPEVEVPQHL (96 aa)). The residue at position 369 (Ser369) is a Phosphoserine. A compositionally biased stretch (basic and acidic residues) spans 439-463 (DQKEVDTSEKKLLERLPEVEVPQHL).

It belongs to the nucleobindin family. As to quaternary structure, interacts (via GBA motif) with guanine nucleotide-binding protein G(i) alpha subunits GNAI1, GNAI2 and GNAI3 with higher affinity for GNAI1 and GNAI3 than for GNAI2. Preferentially interacts with inactive rather than active GNAI3. Interaction with GNAI3 is inhibited when NUCB1 binds calcium, probably due to a conformational change which renders the GBA motif inaccessible.

It is found in the golgi apparatus. It localises to the cis-Golgi network membrane. The protein localises to the cytoplasm. The protein resides in the secreted. Functionally, major calcium-binding protein of the Golgi which may have a role in calcium homeostasis. Acts as a non-receptor guanine nucleotide exchange factor which binds to and activates alpha subunits of guanine nucleotide-binding proteins (G proteins). In Pongo abelii (Sumatran orangutan), this protein is Nucleobindin-1 (NUCB1).